Reading from the N-terminus, the 552-residue chain is Chaperonin GroEL (552 aa).

Residues 30 to 33, Lys51, 87 to 91, Gly415, and Asp496 contribute to the ATP site; these read TLGP and DGTTT.

This sequence belongs to the chaperonin (HSP60) family. In terms of assembly, forms a cylinder of 14 subunits composed of two heptameric rings stacked back-to-back. Interacts with the co-chaperonin GroES.

The protein resides in the cytoplasm. It carries out the reaction ATP + H2O + a folded polypeptide = ADP + phosphate + an unfolded polypeptide.. Together with its co-chaperonin GroES, plays an essential role in assisting protein folding. The GroEL-GroES system forms a nano-cage that allows encapsulation of the non-native substrate proteins and provides a physical environment optimized to promote and accelerate protein folding. In Paramagnetospirillum magneticum (strain ATCC 700264 / AMB-1) (Magnetospirillum magneticum), this protein is Chaperonin GroEL.